Here is a 172-residue protein sequence, read N- to C-terminus: 3-hydroxydecanoyl-[acyl-carrier-protein] dehydratase (172 aa).

His71 is a catalytic residue.

This sequence belongs to the thioester dehydratase family. FabA subfamily. In terms of assembly, homodimer.

Its subcellular location is the cytoplasm. The enzyme catalyses a (3R)-hydroxyacyl-[ACP] = a (2E)-enoyl-[ACP] + H2O. It catalyses the reaction (3R)-hydroxydecanoyl-[ACP] = (2E)-decenoyl-[ACP] + H2O. The catalysed reaction is (2E)-decenoyl-[ACP] = (3Z)-decenoyl-[ACP]. It participates in lipid metabolism; fatty acid biosynthesis. Functionally, necessary for the introduction of cis unsaturation into fatty acids. Catalyzes the dehydration of (3R)-3-hydroxydecanoyl-ACP to E-(2)-decenoyl-ACP and then its isomerization to Z-(3)-decenoyl-ACP. Can catalyze the dehydratase reaction for beta-hydroxyacyl-ACPs with saturated chain lengths up to 16:0, being most active on intermediate chain length. The protein is 3-hydroxydecanoyl-[acyl-carrier-protein] dehydratase of Salmonella arizonae (strain ATCC BAA-731 / CDC346-86 / RSK2980).